Reading from the N-terminus, the 120-residue chain is Basic phospholipase A2 homolog LmutTX (120 aa).

Intrachain disulfides connect C26/C114, C28/C44, C43/C95, C49/C120, C50/C88, C57/C81, and C75/C86.

Belongs to the phospholipase A2 family. Group II subfamily. K49 sub-subfamily. As to quaternary structure, monomer. Expressed by the venom gland.

Its subcellular location is the secreted. Its function is as follows. Snake venom phospholipase A2 homolog that lacks enzymatic activity. Shows moderate cytotoxicity against C2C12 myotubes (activity above 200 ug/mL). Also shows antibacterial activity against both Gram-positive and Gram-negative bacteria. A model of myotoxic mechanism has been proposed: an apo Lys49-PLA2 is activated by the entrance of a hydrophobic molecule (e.g. fatty acid) at the hydrophobic channel of the protein leading to a reorientation of a monomer. This reorientation causes a transition between 'inactive' to 'active' states, causing alignment of C-terminal and membrane-docking sites (MDoS) side-by-side and putting the membrane-disruption sites (MDiS) in the same plane, exposed to solvent and in a symmetric position for both monomers. The MDoS region stabilizes the toxin on membrane by the interaction of charged residues with phospholipid head groups. Subsequently, the MDiS region destabilizes the membrane with penetration of hydrophobic residues. This insertion causes a disorganization of the membrane, allowing an uncontrolled influx of ions (i.e. calcium and sodium), and eventually triggering irreversible intracellular alterations and cell death. In Lachesis muta muta (Bushmaster), this protein is Basic phospholipase A2 homolog LmutTX.